The following is a 359-amino-acid chain: Protein Wnt-5a (359 aa).

The first 20 residues, 1 to 20, serve as a signal peptide directing secretion; that stretch reads MASRYLTLAAALLASFLQVD. A disulfide bridge connects residues Cys-83 and Cys-94. Residues Asn-93 and Asn-99 are each glycosylated (N-linked (GlcNAc...) asparagine). 10 disulfides stabilise this stretch: Cys-133–Cys-141, Cys-143–Cys-161, Cys-217–Cys-231, Cys-219–Cys-226, Cys-288–Cys-319, Cys-304–Cys-314, Cys-318–Cys-358, Cys-334–Cys-349, Cys-336–Cys-346, and Cys-341–Cys-342. Residue Ser-223 is the site of O-palmitoleoyl serine; by PORCN attachment. N-linked (GlcNAc...) asparagine glycans are attached at residues Asn-291 and Asn-305.

The protein belongs to the Wnt family. In terms of processing, palmitoleoylation is required for efficient binding to frizzled receptors. Depalmitoleoylation leads to Wnt signaling pathway inhibition.

The protein localises to the secreted. It is found in the extracellular space. The protein resides in the extracellular matrix. Ligand for members of the frizzled family of seven transmembrane receptors. Can activate or inhibit canonical Wnt signaling, depending on receptor context. Required during embryogenesis for extension of the primary anterior-posterior axis. The chain is Protein Wnt-5a (WNT5A) from Pleurodeles waltl (Iberian ribbed newt).